Reading from the N-terminus, the 864-residue chain is Seed linoleate 9S-lipoxygenase (864 aa).

In terms of domain architecture, PLAT spans 44 to 171 (LGQGVSLVGG…SYKKNRIFFV (128 aa)). A Lipoxygenase domain is found at 174-864 (TYLPSATPAP…FKGIPNSISI (691 aa)). Positions 244 to 264 (TGRERTRTDPNSEKPGEVYVP) are disordered. Residues His-525, His-530, His-716, Asn-720, and Ile-864 each contribute to the Fe cation site.

The protein belongs to the lipoxygenase family. In terms of assembly, monomer. Fe cation is required as a cofactor. In terms of tissue distribution, germinated cotyledons.

The protein resides in the cytoplasm. It catalyses the reaction (9Z,12Z)-octadecadienoate + O2 = (9S)-hydroperoxy-(10E,12Z)-octadecadienoate. It functions in the pathway lipid metabolism; oxylipin biosynthesis. Functionally, plant lipoxygenase may be involved in a number of diverse aspects of plant physiology including growth and development, pest resistance, and senescence or responses to wounding. It catalyzes the hydroperoxidation of lipids containing a cis,cis-1,4-pentadiene structure. The protein is Seed linoleate 9S-lipoxygenase (LOX1.4) of Glycine max (Soybean).